Here is a 286-residue protein sequence, read N- to C-terminus: Protein PXR1 (286 aa).

A disordered region spans residues 1–20 (MGLAGTKVKQRFGLDPRNTS). Residues 25–71 (KSRFGHRYLESMGWAPGKGLGLVEHATTTHVKVSVKDDTVGLGAKLA) form the G-patch domain. The interval 148–255 (EDESEVNFKS…PRKHDQISNV (108 aa)) is disordered. Residues 168–198 (PSRDSTSHAKRMRGDESKKSTRDQSKQERKE) are compositionally biased toward basic and acidic residues. A compositionally biased stretch (basic residues) spans 199–230 (KKIKTEKKEKKEKKEKKEKKEKKEKKEKKEKK).

Belongs to the PINX1 family.

It is found in the nucleus. The protein localises to the nucleolus. In terms of biological role, involved in rRNA-processing at A0, A1 and A2 sites and negatively regulates telomerase. The sequence is that of Protein PXR1 (PXR1) from Meyerozyma guilliermondii (strain ATCC 6260 / CBS 566 / DSM 6381 / JCM 1539 / NBRC 10279 / NRRL Y-324) (Yeast).